A 450-amino-acid polypeptide reads, in one-letter code: MKHTEQFHQKHILVLGLAKSGEAAARLLHDLGAIVTVNDQKPLADNPQAQKLQKEGIHVVCGEHPISLLDGKELVVKNPGIRYDNPIVEEAIKRGISVVTEVELASKVSEAEIVAITGSNGKTTTTSLVVEMLKGSAREPKVAGNIGVVASDVAREATADDVIVMEVSSFQLMGTSHFRPKVAILLNIFDAHLDYHGSKENYVAAKKKIVENMKEEDYFVYNADDPLVSKVAAETKATPIPFSRSTVVKSGAYVDGETYMFRGEKIVEKGDVVLPGDHNVDNVLAAMSAALLMGATKEQIHHVLSTFSGVEHRLQFVGTAFERKWYNDSKATNILSTTAAIQSFTDPIVLLAGGLDRGNSFDDLIPALQKVKAVVLFGETKHKLAQAAMEAGVETIVEAERVEDAVRKALDVSANGDVILLSPACASWDQYRTFEERGEAFVTSIEGLQE.

118–124 (GSNGKTT) provides a ligand contact to ATP.

The protein belongs to the MurCDEF family.

Its subcellular location is the cytoplasm. It catalyses the reaction UDP-N-acetyl-alpha-D-muramoyl-L-alanine + D-glutamate + ATP = UDP-N-acetyl-alpha-D-muramoyl-L-alanyl-D-glutamate + ADP + phosphate + H(+). It functions in the pathway cell wall biogenesis; peptidoglycan biosynthesis. Its function is as follows. Cell wall formation. Catalyzes the addition of glutamate to the nucleotide precursor UDP-N-acetylmuramoyl-L-alanine (UMA). The protein is UDP-N-acetylmuramoylalanine--D-glutamate ligase of Halalkalibacterium halodurans (strain ATCC BAA-125 / DSM 18197 / FERM 7344 / JCM 9153 / C-125) (Bacillus halodurans).